Consider the following 868-residue polypeptide: Translation initiation factor IF-2 (868 aa).

The interval 201–269 (KEEVKPEKVS…GTEKSDKYRE (69 aa)) is disordered. Basic residues predominate over residues 249–260 (RGGRSKFKKKKG). A tr-type G domain is found at 368 to 537 (GRAPVVTIMG…LLQSEVLELK (170 aa)). Residues 377-384 (GHVDHGKT) are G1. 377–384 (GHVDHGKT) contributes to the GTP binding site. The segment at 402 to 406 (GITQH) is G2. Residues 423 to 426 (DTPG) are G3. Residues 423–427 (DTPGH) and 477–480 (NKMD) contribute to the GTP site. The segment at 477-480 (NKMD) is G4. A G5 region spans residues 513-515 (SAK).

Belongs to the TRAFAC class translation factor GTPase superfamily. Classic translation factor GTPase family. IF-2 subfamily.

The protein resides in the cytoplasm. Functionally, one of the essential components for the initiation of protein synthesis. Protects formylmethionyl-tRNA from spontaneous hydrolysis and promotes its binding to the 30S ribosomal subunits. Also involved in the hydrolysis of GTP during the formation of the 70S ribosomal complex. This Legionella pneumophila (strain Corby) protein is Translation initiation factor IF-2.